Reading from the N-terminus, the 323-residue chain is Aldo-keto reductase family 1 member C1 (323 aa).

Residues 20-24 and Asp50 each bind NADP(+); that span reads GFGTY. Position 24 (Tyr24) interacts with substrate. Catalysis depends on Tyr55, which acts as the Proton donor. His117 is a binding site for substrate. NADP(+) contacts are provided by residues 166–167, Gln190, and 216–222; these read SN and YSALGSH. His222 and Trp227 together coordinate substrate. 270 to 280 lines the NADP(+) pocket; that stretch reads KSYNEQRIRQN.

It belongs to the aldo/keto reductase family. In terms of assembly, monomer.

The protein resides in the cytoplasm. The protein localises to the cytosol. It catalyses the reaction a 3alpha-hydroxysteroid + NADP(+) = a 3-oxosteroid + NADPH + H(+). The catalysed reaction is a 3alpha-hydroxysteroid + NAD(+) = a 3-oxosteroid + NADH + H(+). It carries out the reaction (17R,20S)-17,20-dihydroxypregn-4-en-3-one + NADP(+) = 17alpha-hydroxyprogesterone + NADPH + H(+). The enzyme catalyses (17R,20S)-17,20-dihydroxypregn-4-en-3-one + NAD(+) = 17alpha-hydroxyprogesterone + NADH + H(+). It catalyses the reaction (20S)-hydroxypregn-4-en-3-one + NADP(+) = progesterone + NADPH + H(+). The catalysed reaction is (20S)-hydroxypregn-4-en-3-one + NAD(+) = progesterone + NADH + H(+). It carries out the reaction (1R,2R)-1,2-dihydrobenzene-1,2-diol + NADP(+) = catechol + NADPH + H(+). The enzyme catalyses (S)-indan-1-ol + NAD(+) = indan-1-one + NADH + H(+). It catalyses the reaction (S)-indan-1-ol + NADP(+) = indan-1-one + NADPH + H(+). The catalysed reaction is 5alpha-androstane-3alpha,17beta-diol + NADP(+) = 17beta-hydroxy-5alpha-androstan-3-one + NADPH + H(+). It carries out the reaction 5alpha-androstane-3beta,17beta-diol + NADP(+) = 17beta-hydroxy-5alpha-androstan-3-one + NADPH + H(+). The enzyme catalyses 5alpha-androstane-3alpha,17beta-diol + NAD(+) = 17beta-hydroxy-5alpha-androstan-3-one + NADH + H(+). It catalyses the reaction 17beta-hydroxy-5alpha-androstan-3-one + NADP(+) = 5alpha-androstan-3,17-dione + NADPH + H(+). The catalysed reaction is androsterone + NADP(+) = 5alpha-androstan-3,17-dione + NADPH + H(+). It carries out the reaction androsterone + NADPH + H(+) = 5alpha-androstane-3alpha,17beta-diol + NADP(+). The enzyme catalyses 5alpha-androstane-3alpha,17beta-diol + NAD(+) = androsterone + NADH + H(+). It catalyses the reaction 17beta-estradiol + NADP(+) = estrone + NADPH + H(+). The catalysed reaction is 17beta-estradiol + NAD(+) = estrone + NADH + H(+). It carries out the reaction testosterone + NADP(+) = androst-4-ene-3,17-dione + NADPH + H(+). The enzyme catalyses 20alpha-hydroxy-5beta-pregnan-3-one + NADP(+) = 5beta-pregnan-3,20-dione + NADPH + H(+). It catalyses the reaction 3beta-hydroxy-5beta-pregnane-20-one + NADP(+) = 5beta-pregnan-3,20-dione + NADPH + H(+). The catalysed reaction is 3beta-hydroxy-5beta-pregnane-20-one + NADPH + H(+) = 3beta,20alpha-dihydroxy-5beta-pregnane + NADP(+). It carries out the reaction (3beta,5alpha,17beta)-3-hydroxyandrostan-17-yl sulfate + NADP(+) = 5alpha-dihydrotestosterone sulfate + NADPH + H(+). Its pathway is steroid metabolism. Its function is as follows. Cytosolic aldo-keto reductase that catalyzes the NADH and NADPH-dependent reduction of ketosteroids to hydroxysteroids. Most probably acts as a reductase in vivo since the oxidase activity measured in vitro is inhibited by physiological concentrations of NADPH. Displays a broad positional specificity acting on positions 3, 17 and 20 of steroids and regulates the metabolism of hormones like estrogens and androgens. May also reduce conjugated steroids such as 5alpha-dihydrotestosterone sulfate. Displays affinity for bile acids. The chain is Aldo-keto reductase family 1 member C1 (AKR1C1) from Pongo abelii (Sumatran orangutan).